The primary structure comprises 664 residues: Glycine--tRNA ligase beta subunit (664 aa).

The protein belongs to the class-II aminoacyl-tRNA synthetase family. Tetramer of two alpha and two beta subunits.

Its subcellular location is the cytoplasm. It carries out the reaction tRNA(Gly) + glycine + ATP = glycyl-tRNA(Gly) + AMP + diphosphate. This is Glycine--tRNA ligase beta subunit from Rickettsia peacockii (strain Rustic).